The sequence spans 1117 residues: Cytospin-A (1117 aa).

Disordered stretches follow at residues 1–176 (MKKA…NQIS), 293–323 (SLSP…GSVE), and 358–390 (SSDD…NASE). Low complexity predominate over residues 45–90 (TAASLSKTKSSDDLLAGMAGGVTVTNGVKGKKSTCPSAAPSASAPA). Residues 93 to 117 (TVENKSKISTGTASSTKRNTSTGNK) are compositionally biased toward polar residues. 2 stretches are compositionally biased toward basic and acidic residues: residues 120–131 (SSTRERLRERTR) and 158–171 (TATE…KSKS). The stretch at 168-280 (KSKSDNQISD…LNALGFSLEQ (113 aa)) forms a coiled coil. Positions 293 to 303 (SLSPEITPGNQ) are enriched in polar residues. Positions 358–377 (SSDDALDAPSSSESEGIPSI) are enriched in low complexity. Residues Ser384, Ser385, and Ser389 each carry the phosphoserine modification. Coiled coils occupy residues 394 to 449 (ACLT…MESL) and 487 to 807 (RYME…RGRV). Phosphoserine is present on residues Ser868, Ser881, and Ser887. The interval 919–1001 (RTSSASRPAS…SRIREERKDP (83 aa)) is disordered. A compositionally biased stretch (basic and acidic residues) spans 946-956 (RSSEEMKRDIS). Over residues 971-990 (TTSPQLSLSSSPTASVTPTT) the composition is skewed to low complexity. A Calponin-homology (CH) domain is found at 1011–1116 (GSKRNALLKW…YVTAIYKYFE (106 aa)).

The protein belongs to the cytospin-A family. May interact with both microtubules and actin cytoskeleton.

The protein resides in the cytoplasm. It is found in the cytoskeleton. The protein localises to the spindle. It localises to the cell junction. Its subcellular location is the gap junction. Functionally, involved in cytokinesis and spindle organization. May play a role in actin cytoskeleton organization and microtubule stabilization and hence required for proper cell adhesion and migration. In Pan troglodytes (Chimpanzee), this protein is Cytospin-A (SPECC1L).